Reading from the N-terminus, the 179-residue chain is Trypsin inhibitor (179 aa).

Q1 carries the post-translational modification Pyrrolidone carboxylic acid. Disulfide bonds link C40–C85 and C132–C143.

This sequence belongs to the protease inhibitor I3 (leguminous Kunitz-type inhibitor) family. Heterodimer of an alpha and a beta chain linked by a disulfide bond. In terms of tissue distribution, abundant in dry seeds.

The protein resides in the secreted. Inhibits trypsin, plasmin, human plasma kallikrein, chymotrypsin and factor XIIa activity. This chain is Trypsin inhibitor, found in Leucaena leucocephala (White popinac).